Consider the following 201-residue polypeptide: Large ribosomal subunit protein uL4 (201 aa).

A disordered region spans residues 46 to 71 (QKTRAEITGTGKKPWRQKGTGRARAG).

It belongs to the universal ribosomal protein uL4 family. In terms of assembly, part of the 50S ribosomal subunit.

In terms of biological role, one of the primary rRNA binding proteins, this protein initially binds near the 5'-end of the 23S rRNA. It is important during the early stages of 50S assembly. It makes multiple contacts with different domains of the 23S rRNA in the assembled 50S subunit and ribosome. Its function is as follows. Forms part of the polypeptide exit tunnel. The sequence is that of Large ribosomal subunit protein uL4 from Shewanella amazonensis (strain ATCC BAA-1098 / SB2B).